We begin with the raw amino-acid sequence, 417 residues long: Squamosa promoter-binding-like protein 14 (417 aa).

Gly residues-rich tracts occupy residues 1-26 (MEMA…GGGG) and 51-60 (AGGGGTGSGS). 2 disordered regions span residues 1-32 (MEMA…EHRQ) and 51-102 (AGGG…PPPP). Positions 61–74 (GSASAAPPSSSSKA) are enriched in low complexity. Positions 75-84 (AGGGRGGGGK) are enriched in gly residues. The SBP-type zinc finger occupies 101-178 (PPRCQVEGCG…AGHNERRRRP (78 aa)). Zn(2+) contacts are provided by Cys104, Cys109, Cys126, His129, Cys145, Cys148, and His152. Residues 161–177 (KRSCRRRLAGHNERRRR) carry the Bipartite nuclear localization signal motif. Ser163 carries the post-translational modification Phosphoserine. Residue Cys164 coordinates Zn(2+). A disordered region spans residues 387 to 417 (LQGNGPAPAPRIDPGSGSTFDQTSNTMDWSL). Polar residues predominate over residues 402–417 (SGSTFDQTSNTMDWSL).

Interacts with PCF1 and PCF2. Interacts with IPI1. Interacts with D53. Interacts with SLR1. Interacts (via C-terminus) with SHI1. Phosphorylated at Ser-163 in response to infection by the fungal pathogen Magnaporthe oryzae. In terms of processing, ubiquitinated by IPI1, which leads to proteasomal degradation. Expressed in young panicles. Expressed in the shoot apex at both the vegetative and reproductive stages. Highly expressed in the promordia of primary and secondary branches. Highly expressed in young panicles.

Its subcellular location is the nucleus. In terms of biological role, transcriptional activator that binds to the SBP-box DNA core binding motif 5'-GTAC-3'. Can target the TCP motif 5'-TGGGCC/T-3' through interaction with PCF1 and PCF2. Key regulator of the plant architecture that controls shoot branching and panicle development. Promotes panicle branching. Promotes high grain yield. Binds to the promoters of TB1 and DEP1. Suppresses rice tillering mainly through positive regulation of TB1. Regulates plant height and panicle length through positive regulation of DEP1. Repressed by D53 in strigolactone (SL) signaling. Acts with D53 to mediate the SL-regulated tiller development. Functions as a direct downstream component of D53 in regulating tiller number and SL-induced gene expression. Binds directly to the D53 promoter and plays a critical role in the negative feedback regulation of SL-induced D53 expression. Involved in defense response against pathogens. Phosphorylated at Ser-163 in response to infection by the fungal pathogen Magnaporthe oryzae. Phosphorylation reduces SPL14/IPA1 binding to the GTAC site in the DEP1 promoter and enhances binding to the TGGGCC site in the WRKY45 promoter. Binding to the promoter of the pathogen defense gene WRKY45 activates its expression, leading to enhanced disease resistance. Reduces gibberellin-mediated disease susceptibility by stabilizing SLR1. Possesses transactivation activity in yeast cells. This Oryza sativa subsp. japonica (Rice) protein is Squamosa promoter-binding-like protein 14.